The chain runs to 148 residues: MAHLLLLHGPNLNLLGTREPEVYGRTTLAQIDAALVDRAQAAGHALDCLQSNAEHVLVERIHAAREDGTAYILINPAAFTHTSLALRDALLGVGLPFVEIHLSNPHAREPFRHHSYLSDKADGVICGFGADSYRLALEAVIARLECDA.

Residue tyrosine 23 is the Proton acceptor of the active site. Substrate-binding residues include asparagine 75, histidine 81, and aspartate 88. Histidine 101 functions as the Proton donor in the catalytic mechanism. Residues 102–103 (LS) and arginine 112 each bind substrate.

It belongs to the type-II 3-dehydroquinase family. Homododecamer.

The enzyme catalyses 3-dehydroquinate = 3-dehydroshikimate + H2O. Its pathway is metabolic intermediate biosynthesis; chorismate biosynthesis; chorismate from D-erythrose 4-phosphate and phosphoenolpyruvate: step 3/7. Functionally, catalyzes a trans-dehydration via an enolate intermediate. The chain is 3-dehydroquinate dehydratase from Xanthomonas oryzae pv. oryzae (strain MAFF 311018).